A 237-amino-acid polypeptide reads, in one-letter code: Homeobox protein Nkx-3.1 (237 aa).

Positions 1-14 (MLRVAEPREPRVEA) are enriched in basic and acidic residues. Disordered stretches follow at residues 1 to 96 (MLRV…EPES) and 108 to 130 (EHNP…RSRA). Polar residues predominate over residues 24–34 (PTQSKRLTSFL). Composition is skewed to basic and acidic residues over residues 38 to 47 (ILRDRAERHG) and 57 to 71 (PDPR…DKAG). The segment at residues 125-184 (QKRSRAAFSHTQVIELERKFSHQKYLSAPERAHLAKNLKLTETQVKIWFQNRRYKTKRKQ) is a DNA-binding region (homeobox).

It belongs to the NK-3 homeobox family. In terms of assembly, interacts with serum response factor (SRF). Interacts with SPDEF. Interacts with WDR77. Interacts with TOPORS which polyubiquitinates NKX3-1 and induces its proteasomal degradation. Interacts with FEM1B. In terms of processing, ubiquitinated by TOPORS; monoubiquitinated at several residues and also polyubiquitinated on single residues. As to expression, expressed mostly in the male urogenital tract, with highest expression in the epithelial cells lining the ducts of anterior, dorsolateral and ventral prostate and in the bulbourethral gland, and much lower in the seminal vesicle and the testis. Expression in the prostate increases during sexual maturation and is drastically reduced following castration. Expressed also in brain (hippocampus and external granular layer of the cerebral cortex), kidney (intralobular arteries), thymus and adrenal and salivary glands.

It is found in the nucleus. Its function is as follows. Transcription factor, which binds preferentially the consensus sequence 5'-TAAGT[AG]-3' and can behave as a transcriptional repressor. Plays an important role in normal prostate development, regulating proliferation of glandular epithelium and in the formation of ducts in prostate. Acts as a tumor suppressor controlling prostate carcinogenesis, as shown by the ability to suppress growth and tumorigenicity of prostate carcinoma cells. Plays a role in the formation of minor salivary glands (particularly palatine and lingual glands). The protein is Homeobox protein Nkx-3.1 of Mus musculus (Mouse).